Here is a 468-residue protein sequence, read N- to C-terminus: ATP synthase subunit beta (468 aa).

155–162 serves as a coordination point for ATP; the sequence is GGAGVGKT.

Belongs to the ATPase alpha/beta chains family. As to quaternary structure, F-type ATPases have 2 components, CF(1) - the catalytic core - and CF(0) - the membrane proton channel. CF(1) has five subunits: alpha(3), beta(3), gamma(1), delta(1), epsilon(1). CF(0) has three main subunits: a(1), b(2) and c(9-12). The alpha and beta chains form an alternating ring which encloses part of the gamma chain. CF(1) is attached to CF(0) by a central stalk formed by the gamma and epsilon chains, while a peripheral stalk is formed by the delta and b chains.

It localises to the cell membrane. It catalyses the reaction ATP + H2O + 4 H(+)(in) = ADP + phosphate + 5 H(+)(out). In terms of biological role, produces ATP from ADP in the presence of a proton gradient across the membrane. The catalytic sites are hosted primarily by the beta subunits. The sequence is that of ATP synthase subunit beta from Streptococcus thermophilus (strain ATCC BAA-250 / LMG 18311).